The following is a 46-amino-acid chain: DNA-directed RNA polymerase subunit Rpo12 (46 aa).

Positions 8, 23, and 26 each coordinate Zn(2+).

It belongs to the archaeal Rpo12/eukaryotic RPC10 RNA polymerase subunit family. Part of the RNA polymerase complex. It depends on Zn(2+) as a cofactor.

The protein resides in the cytoplasm. It catalyses the reaction RNA(n) + a ribonucleoside 5'-triphosphate = RNA(n+1) + diphosphate. In terms of biological role, DNA-dependent RNA polymerase (RNAP) catalyzes the transcription of DNA into RNA using the four ribonucleoside triphosphates as substrates. This chain is DNA-directed RNA polymerase subunit Rpo12, found in Archaeoglobus fulgidus (strain ATCC 49558 / DSM 4304 / JCM 9628 / NBRC 100126 / VC-16).